Consider the following 110-residue polypeptide: Nucleoid-associated protein PERMA_0533 (110 aa).

It belongs to the YbaB/EbfC family. As to quaternary structure, homodimer.

It is found in the cytoplasm. The protein localises to the nucleoid. Functionally, binds to DNA and alters its conformation. May be involved in regulation of gene expression, nucleoid organization and DNA protection. The sequence is that of Nucleoid-associated protein PERMA_0533 from Persephonella marina (strain DSM 14350 / EX-H1).